Reading from the N-terminus, the 539-residue chain is Phosphoenolpyruvate carboxykinase (ATP) (539 aa).

Substrate contacts are provided by R61, Y195, and K201. ATP-binding positions include K201, H220, and 238–246; that span reads GLSGTGKTT. The Mn(2+) site is built by K201 and H220. A Mn(2+)-binding site is contributed by D259. The ATP site is built by E287, R325, and T450. Residue R325 coordinates substrate.

Belongs to the phosphoenolpyruvate carboxykinase (ATP) family. The cofactor is Mn(2+).

It is found in the cytoplasm. It catalyses the reaction oxaloacetate + ATP = phosphoenolpyruvate + ADP + CO2. It functions in the pathway carbohydrate biosynthesis; gluconeogenesis. In terms of biological role, involved in the gluconeogenesis. Catalyzes the conversion of oxaloacetate (OAA) to phosphoenolpyruvate (PEP) through direct phosphoryl transfer between the nucleoside triphosphate and OAA. The sequence is that of Phosphoenolpyruvate carboxykinase (ATP) from Methylobacterium radiotolerans (strain ATCC 27329 / DSM 1819 / JCM 2831 / NBRC 15690 / NCIMB 10815 / 0-1).